Reading from the N-terminus, the 503-residue chain is Glutamate--tRNA ligase 1 (503 aa).

The short motif at 17–27 (PSPTGFLHIGN) is the 'HIGH' region element. Positions 261-265 (KLSKR) match the 'KMSKS' region motif. Lys-264 serves as a coordination point for ATP.

It belongs to the class-I aminoacyl-tRNA synthetase family. Glutamate--tRNA ligase type 1 subfamily. Monomer.

The protein resides in the cytoplasm. It catalyses the reaction tRNA(Glu) + L-glutamate + ATP = L-glutamyl-tRNA(Glu) + AMP + diphosphate. Its function is as follows. Catalyzes the attachment of glutamate to tRNA(Glu) in a two-step reaction: glutamate is first activated by ATP to form Glu-AMP and then transferred to the acceptor end of tRNA(Glu). This chain is Glutamate--tRNA ligase 1, found in Levilactobacillus brevis (strain ATCC 367 / BCRC 12310 / CIP 105137 / JCM 1170 / LMG 11437 / NCIMB 947 / NCTC 947) (Lactobacillus brevis).